We begin with the raw amino-acid sequence, 202 residues long: Probable host range protein 2-2 (202 aa).

Belongs to the poxviridae C7 protein family.

Its function is as follows. Plays a role for multiplication of the virus in different cell types. The sequence is that of Probable host range protein 2-2 from Oryctolagus cuniculus (Rabbit).